The primary structure comprises 199 residues: Pyridoxine/pyridoxamine 5'-phosphate oxidase (199 aa).

FMN contacts are provided by residues 45-50, 60-61, Arg-66, Lys-67, and Gln-89; these read RVVLLK and FT. Lys-50 contributes to the substrate binding site. The substrate site is built by Tyr-107, Arg-111, and Ser-115. FMN contacts are provided by residues 124–125 and Trp-169; that span reads QS. 175-177 contributes to the substrate binding site; it reads RIH. Residue Arg-179 participates in FMN binding.

The protein belongs to the pyridoxamine 5'-phosphate oxidase family. In terms of assembly, homodimer. FMN is required as a cofactor.

The catalysed reaction is pyridoxamine 5'-phosphate + O2 + H2O = pyridoxal 5'-phosphate + H2O2 + NH4(+). The enzyme catalyses pyridoxine 5'-phosphate + O2 = pyridoxal 5'-phosphate + H2O2. It participates in cofactor metabolism; pyridoxal 5'-phosphate salvage; pyridoxal 5'-phosphate from pyridoxamine 5'-phosphate: step 1/1. The protein operates within cofactor metabolism; pyridoxal 5'-phosphate salvage; pyridoxal 5'-phosphate from pyridoxine 5'-phosphate: step 1/1. Its function is as follows. Catalyzes the oxidation of either pyridoxine 5'-phosphate (PNP) or pyridoxamine 5'-phosphate (PMP) into pyridoxal 5'-phosphate (PLP). This Ehrlichia chaffeensis (strain ATCC CRL-10679 / Arkansas) protein is Pyridoxine/pyridoxamine 5'-phosphate oxidase.